We begin with the raw amino-acid sequence, 185 residues long: Threonylcarbamoyl-AMP synthase (185 aa).

Residues 4–185 enclose the YrdC-like domain; it reads SWRVQQAAQD…IATGQVMRAG (182 aa).

Belongs to the SUA5 family. TsaC subfamily.

Its subcellular location is the cytoplasm. It catalyses the reaction L-threonine + hydrogencarbonate + ATP = L-threonylcarbamoyladenylate + diphosphate + H2O. Functionally, required for the formation of a threonylcarbamoyl group on adenosine at position 37 (t(6)A37) in tRNAs that read codons beginning with adenine. Catalyzes the conversion of L-threonine, HCO(3)(-)/CO(2) and ATP to give threonylcarbamoyl-AMP (TC-AMP) as the acyladenylate intermediate, with the release of diphosphate. The sequence is that of Threonylcarbamoyl-AMP synthase from Pseudomonas savastanoi pv. phaseolicola (strain 1448A / Race 6) (Pseudomonas syringae pv. phaseolicola (strain 1448A / Race 6)).